The primary structure comprises 217 residues: Superoxide dismutase [Mn], mitochondrial (217 aa).

The N-terminal 17 residues, 1–17, are a transit peptide targeting the mitochondrion; sequence MFVARKISPNCKPGVRG. 4 residues coordinate Mn(2+): His43, His91, Asp175, and His179.

It belongs to the iron/manganese superoxide dismutase family. Homotetramer. Mn(2+) is required as a cofactor.

Its subcellular location is the mitochondrion matrix. The enzyme catalyses 2 superoxide + 2 H(+) = H2O2 + O2. Its function is as follows. Destroys superoxide anion radicals which are normally produced within the cells and which are toxic to biological systems. This is Superoxide dismutase [Mn], mitochondrial (Sod2) from Drosophila melanogaster (Fruit fly).